Consider the following 804-residue polypeptide: Lon protease 2 (804 aa).

The 198-residue stretch at 19 to 216 folds into the Lon N-terminal domain; sequence VPILPLRNSV…LVLAMVGRQL (198 aa). 367 to 374 contacts ATP; the sequence is GPPGVGKT. The region spanning 603 to 784 is the Lon proteolytic domain; the sequence is TLQPGVATGL…EEILPLVLEP (182 aa). Active-site residues include S690 and K733. Residues 782–804 are disordered; the sequence is LEPPRRAPAQSASPEELEEQAGV.

This sequence belongs to the peptidase S16 family. In terms of assembly, homohexamer. Organized in a ring with a central cavity.

Its subcellular location is the cytoplasm. The catalysed reaction is Hydrolysis of proteins in presence of ATP.. In terms of biological role, ATP-dependent serine protease that mediates the selective degradation of mutant and abnormal proteins as well as certain short-lived regulatory proteins. Required for cellular homeostasis and for survival from DNA damage and developmental changes induced by stress. Degrades polypeptides processively to yield small peptide fragments that are 5 to 10 amino acids long. Binds to DNA in a double-stranded, site-specific manner. The chain is Lon protease 2 from Sorangium cellulosum (strain So ce56) (Polyangium cellulosum (strain So ce56)).